A 1482-amino-acid chain; its full sequence is Cystic fibrosis transmembrane conductance regulator (1482 aa).

Residues 1-77 (MQRSPLEKAS…KLINALRRCF (77 aa)) lie on the Cytoplasmic side of the membrane. The chain crosses the membrane as a helical span at residues 78 to 98 (FWRFMFYGIILYLGEVTKAVQ). The 285-residue stretch at 81-365 (FMFYGIILYL…WAVQTWYDSL (285 aa)) folds into the ABC transmembrane type-1 1 domain. The Extracellular segment spans residues 99 to 122 (PLLLGRIIASYDPDNKAERSIAIY). Residues 123–146 (LGVGLCLLFIVRTLLLHPAIFGPH) form a helical membrane-spanning segment. Over 147–195 (HIGMQMRIAMFSLIYKKTLKLSSRVLDKISIGQLVSLLSNNLNKFDEGL) the chain is Cytoplasmic. Residues 196–216 (ALAHFVWIAPLQVTLLMGLLW) traverse the membrane as a helical segment. Over 217–222 (ELLQAS) the chain is Extracellular. A helical membrane pass occupies residues 223-243 (AFCGLAFLVVLALFQAGLGKM). At 244 to 298 (MMKYRDQRAGKINERLVITSEMIENIQSVKAYCWEEAMEKMIENLRQTELKLTRK) the chain is on the cytoplasmic side. Residues 299-319 (AAYVRYFNSSAFFFSGLFVVF) traverse the membrane as a helical segment. Topologically, residues 320-339 (LSVLPYALLKGIMLRKIFTT) are extracellular. The chain crosses the membrane as a helical span at residues 340 to 358 (ISFCIVLRMAVTRQFPWAV). At 359–859 (QTWYDSLGAI…YLRYVTVHKS (501 aa)) the chain is on the cytoplasmic side. ATP-binding positions include W401, S434, 458 to 465 (GSTGAGKT), and Q493. The 224-residue stretch at 423–646 (NGDNSLFFSN…RPDFSSKLMG (224 aa)) folds into the ABC transporter 1 domain. Residue C524 is the site of S-palmitoyl cysteine attachment. Phosphoserine is present on residues S549 and S660. The segment at 654–832 (TAERRNSIIT…EEINEEDLRE (179 aa)) is disordered R region. S670 is modified (phosphoserine; by PKA). Phosphoserine is present on S686. K688 participates in a covalent cross-link: Glycyl lysine isopeptide (Lys-Gly) (interchain with G-Cter in ubiquitin). 2 positions are modified to phosphoserine: S700 and S712. A Phosphothreonine modification is found at T717. 5 positions are modified to phosphoserine: S737, S768, S791, S796, and S814. A helical transmembrane segment spans residues 860 to 880 (LIFVLIWCLVVFLAEVAACLV). An ABC transmembrane type-1 2 domain is found at 860–1156 (LIFVLIWCLV…AVNSSIDVDS (297 aa)). The Extracellular portion of the chain corresponds to 881 to 919 (VLCLLKKTSPQDKGNSTKGANNSYAVIITSTSAYYVFYI). N-linked (GlcNAc...) asparagine glycosylation is found at N895 and N901. The chain crosses the membrane as a discontinuously helical span at residues 920–940 (YVGVADGLLALGLFRGLPLVH). Topologically, residues 941–991 (TLITVSKILHRKMLHSVLQAPMSTLNTLKAGGILNRFSKDIAVLDDLLPLT) are cytoplasmic. The helical transmembrane segment at 992–1012 (IFDFIQLLLIVIGAVAVVSVL) threads the bilayer. Topologically, residues 1013–1014 (KP) are extracellular. The chain crosses the membrane as a helical span at residues 1015–1035 (YIFLATVPVIVAFILLRAYFL). Topologically, residues 1036–1096 (HTSQQLKQLE…TANWFLYLST (61 aa)) are cytoplasmic. A helical membrane pass occupies residues 1097–1117 (LRWFQMRIEMIFVIFFIAVTF). Over 1118 to 1131 (ISILTTGEGEGTVG) the chain is Extracellular. Residues 1132-1152 (IILTLAMNIMSTLQWAVNSSI) form a helical membrane-spanning segment. Residues 1153–1482 (DVDSLMRSVS…TEEEVQETRL (330 aa)) lie on the Cytoplasmic side of the membrane. Residues 1212–1445 (MTVKDLTAKY…KSLFRQAISP (234 aa)) enclose the ABC transporter 2 domain. Residues Y1221 and 1246-1253 (GRTGSGKS) each bind ATP. An interaction with GORASP2 region spans residues 1388-1482 (RTLKQAFADC…TEEEVQETRL (95 aa)). Residue C1397 is the site of S-palmitoyl cysteine attachment. Residues 1454–1464 (HRNSSKQRSRS) show a composition bias toward basic residues. The segment at 1454–1482 (HRNSSKQRSRSKIAALKEETEEEVQETRL) is disordered. Phosphoserine is present on S1458. Over residues 1472 to 1482 (ETEEEVQETRL) the composition is skewed to acidic residues. A PDZ-binding motif is present at residues 1480–1482 (TRL).

This sequence belongs to the ABC transporter superfamily. ABCC family. CFTR transporter (TC 3.A.1.202) subfamily. Monomer; does not require oligomerization for channel activity. May form oligomers in the membrane. Interacts with SLC26A3, SLC26A6 and NHERF1. Interacts with SHANK2. Interacts with MYO6. Interacts (via C-terminus) with GOPC (via PDZ domain); this promotes CFTR internalization and thereby decreases channel activity. Interacts with SLC4A7 through NHERF1. Found in a complex with MYO5B and RAB11A. Interacts with ANO1. Interacts with SLC26A8. Interacts with AHCYL1; the interaction increases CFTR activity. Interacts with CSE1L. The core-glycosylated form interacts with GORASP2 (via PDZ GRASP-type 1 domain) in respone to ER stress. Interacts with MARCHF2; the interaction leads to CFTR ubiqtuitination and degradation. Interacts with ADGRG2. In terms of processing, N-glycosylated. Post-translationally, phosphorylated; cAMP treatment promotes phosphorylation and activates the channel. Dephosphorylation decreases the ATPase activity (in vitro). Phosphorylation at PKA sites activates the channel. Phosphorylation at PKC sites enhances the response to phosphorylation by PKA. Phosphorylated by AMPK; this inhibits channel activity. Ubiquitinated, leading to its degradation in the lysosome. Deubiquitination by USP10 in early endosomes enhances its endocytic recycling to the cell membrane. Ubiquitinated by RNF185 during ER stress. Ubiquitinated by MARCHF2.

It localises to the apical cell membrane. It is found in the early endosome membrane. The protein resides in the cell membrane. Its subcellular location is the recycling endosome membrane. The protein localises to the endoplasmic reticulum membrane. It localises to the nucleus. The enzyme catalyses ATP + H2O + closed Cl(-) channel = ADP + phosphate + open Cl(-) channel.. The catalysed reaction is chloride(in) = chloride(out). It carries out the reaction hydrogencarbonate(in) = hydrogencarbonate(out). It catalyses the reaction ATP + H2O = ADP + phosphate + H(+). Epithelial ion channel that plays an important role in the regulation of epithelial ion and water transport and fluid homeostasis. Mediates the transport of chloride ions across the cell membrane. Possesses an intrinsic ATPase activity and utilizes ATP to gate its channel; the passive flow of anions through the channel is gated by cycles of ATP binding and hydrolysis by the ATP-binding domains. The ion channel is also permeable to HCO(3)(-); selectivity depends on the extracellular chloride concentration. Exerts its function also by modulating the activity of other ion channels and transporters. Contributes to the regulation of the pH and the ion content of the epithelial fluid layer. Modulates the activity of the epithelial sodium channel (ENaC) complex, in part by regulating the cell surface expression of the ENaC complex. May regulate bicarbonate secretion and salvage in epithelial cells by regulating the transporter SLC4A7. Can inhibit the chloride channel activity of ANO1. Plays a role in the chloride and bicarbonate homeostasis during sperm epididymal maturation and capacitation. In Sus scrofa (Pig), this protein is Cystic fibrosis transmembrane conductance regulator.